The primary structure comprises 234 residues: Glycerol-3-phosphate acyltransferase (234 aa).

6 helical membrane passes run 4-24 (LLAILVVSYIVGSIPTSLIAG), 56-76 (TVTLIDIIKGVVAAVSVVAFF), 90-110 (VALRLLAGMSAVIGHVFTVFA), 122-142 (AGMLIGIAPVSMLMVIGVFLL), 152-172 (VASILAAIAFPLIIAIRKYLF), and 191-211 (FHDSLDYHLIIFGLIVAIAII).

This sequence belongs to the PlsY family. As to quaternary structure, probably interacts with PlsX.

It localises to the cell inner membrane. It catalyses the reaction an acyl phosphate + sn-glycerol 3-phosphate = a 1-acyl-sn-glycero-3-phosphate + phosphate. The protein operates within lipid metabolism; phospholipid metabolism. Functionally, catalyzes the transfer of an acyl group from acyl-phosphate (acyl-PO(4)) to glycerol-3-phosphate (G3P) to form lysophosphatidic acid (LPA). This enzyme utilizes acyl-phosphate as fatty acyl donor, but not acyl-CoA or acyl-ACP. In Chlorobium chlorochromatii (strain CaD3), this protein is Glycerol-3-phosphate acyltransferase.